Here is a 908-residue protein sequence, read N- to C-terminus: 3-phosphoinositide-dependent protein kinase B (908 aa).

3 stretches are compositionally biased toward low complexity: residues 53–170 (NNNF…SSSL), 179–189 (YSDSSDSIDSY), and 200–216 (QQQQ…QPLH). The disordered stretch occupies residues 53–267 (NNNFNNNNNN…PNSSIPHKKS (215 aa)). Over residues 250 to 262 (KTSSFGLQPNSSI) the composition is skewed to polar residues. A Protein kinase domain is found at 271-527 (FDFIRTIGKG…ISEIKNHEFF (257 aa)). ATP-binding positions include 281–283 (AYG) and Lys300. Positions 302 to 346 (LNKKLIIKEKKAKYVNTEKTILDSLDNPNIVKLFYTFQDENNLYF) are PIF-pocket. ATP is bound by residues 349–351 (EYC) and Asp355. Catalysis depends on Asp394, which acts as the Proton acceptor. ATP-binding residues include Glu398 and Asp412. 2 disordered regions span residues 538 to 560 (SQTP…NSSL) and 606 to 755 (ISNN…KNLQ). A compositionally biased stretch (low complexity) spans 607-684 (SNNNNNNNNT…PAYSSTPSST (78 aa)). Residues 696–709 (SSCSSNNLLGKSSN) are compositionally biased toward polar residues. Over residues 710–741 (QQYQPFQFHQQQQQQQQQQQRERSSTTTPSPT) the composition is skewed to low complexity. The PH domain maps to 764-902 (SSFSTSSPMS…KLWVDLINEL (139 aa)).

This sequence belongs to the protein kinase superfamily. AGC Ser/Thr protein kinase family. PDPK1 subfamily.

It carries out the reaction L-seryl-[protein] + ATP = O-phospho-L-seryl-[protein] + ADP + H(+). The enzyme catalyses L-threonyl-[protein] + ATP = O-phospho-L-threonyl-[protein] + ADP + H(+). The protein is 3-phosphoinositide-dependent protein kinase B (pdkB) of Dictyostelium discoideum (Social amoeba).